The sequence spans 463 residues: Senescence/dehydration-associated protein At3g51250 (463 aa).

Positions 1 to 12 are enriched in basic and acidic residues; the sequence is MNPSHGGDDKQR. 3 disordered regions span residues 1–31, 52–74, and 146–172; these read MNPS…FAST, PNLF…PQAT, and IHPP…KSKS. The segment covering 19 to 31 has biased composition (polar residues); that stretch reads VDQSIPDNPFAST. The 169-residue stretch at 269-437 folds into the Senescence domain; it reads IASGSGKLIR…AWVAFKIRKA (169 aa).

The chain is Senescence/dehydration-associated protein At3g51250 from Arabidopsis thaliana (Mouse-ear cress).